Consider the following 672-residue polypeptide: Spermatid perinuclear RNA-binding protein (672 aa).

In terms of domain architecture, DZF spans 5–363; the sequence is RSFANDDRHV…ALKRPFEDGL (359 aa). Disordered stretches follow at residues 52-73 and 349-371; these read TNKG…GENY and GAGS…DPNK. Basic and acidic residues predominate over residues 357-371; sequence RPFEDGLGDDKDPNK. Positions 387-453 constitute a DRBM 1 domain; it reads DLMNALMRLN…AVKVLQAMGY (67 aa). A compositionally biased stretch (basic and acidic residues) spans 466-476; the sequence is SDEKSDNESKN. The interval 466–499 is disordered; that stretch reads SDEKSDNESKNETVSSNSSNNTGNSTTETSSTLE. A compositionally biased stretch (low complexity) spans 477-497; the sequence is ETVSSNSSNNTGNSTTETSST. In terms of domain architecture, DRBM 2 spans 510–576; that stretch reads SGKNPVMELN…ALAALEKLFS (67 aa). Arg612 and Arg617 each carry asymmetric dimethylarginine.

Interacts with EIF2AK2. Associates with microtubules; it is unsure whether such interaction is direct or indirect.

The protein resides in the cytoplasm. Involved in spermatogenesis and sperm function. Plays a role in regulation of cell growth. Binds to double-stranded DNA and RNA. Binds most efficiently to poly(I:C) RNA than to poly(dI:dC) DNA. Binds also to single-stranded poly(G) RNA. Binds non-specifically to the mRNA PRM1 3'-UTR and adenovirus VA RNA. In Homo sapiens (Human), this protein is Spermatid perinuclear RNA-binding protein (STRBP).